We begin with the raw amino-acid sequence, 265 residues long: 5'-nucleotidase SurE (265 aa).

Residues Asp-8, Asp-9, Ser-39, and Asn-96 each contribute to the a divalent metal cation site.

The protein belongs to the SurE nucleotidase family. Requires a divalent metal cation as cofactor.

Its subcellular location is the cytoplasm. It catalyses the reaction a ribonucleoside 5'-phosphate + H2O = a ribonucleoside + phosphate. Functionally, nucleotidase that shows phosphatase activity on nucleoside 5'-monophosphates. In Dehalococcoides mccartyi (strain CBDB1), this protein is 5'-nucleotidase SurE.